A 532-amino-acid polypeptide reads, in one-letter code: Phosphoenolpyruvate carboxykinase (ATP) (532 aa).

Arginine 60, tyrosine 194, and lysine 200 together coordinate substrate. ATP is bound by residues lysine 200, histidine 219, and 237-245; that span reads GLSGTGKTT. Mn(2+)-binding residues include lysine 200 and histidine 219. A Mn(2+)-binding site is contributed by aspartate 258. Glutamate 286, arginine 324, and threonine 449 together coordinate ATP. Residue arginine 324 coordinates substrate.

It belongs to the phosphoenolpyruvate carboxykinase (ATP) family. The cofactor is Mn(2+).

It is found in the cytoplasm. It carries out the reaction oxaloacetate + ATP = phosphoenolpyruvate + ADP + CO2. It participates in carbohydrate biosynthesis; gluconeogenesis. Functionally, involved in the gluconeogenesis. Catalyzes the conversion of oxaloacetate (OAA) to phosphoenolpyruvate (PEP) through direct phosphoryl transfer between the nucleoside triphosphate and OAA. The chain is Phosphoenolpyruvate carboxykinase (ATP) from Cereibacter sphaeroides (strain ATCC 17029 / ATH 2.4.9) (Rhodobacter sphaeroides).